The chain runs to 803 residues: Putative metal ion transporter C27B12.12c (803 aa).

The span at 1–20 (MSFQQPSNGAQGGNNNALEK) shows a compositional bias: polar residues. The segment at 1-255 (MSFQQPSNGA…SSDVSGSDEN (255 aa)) is disordered. Low complexity predominate over residues 21–45 (TSSNEATSSSSTQVSSLSASGISVS). Over residues 58–82 (MQVQSSQHLEANVQSPVSSQTTYAT) the composition is skewed to polar residues. Composition is skewed to basic residues over residues 105 to 123 (KPKK…RKKI) and 152 to 166 (QSNK…KHSP). 2 stretches are compositionally biased toward low complexity: residues 181 to 194 (ALSA…QHAS) and 218 to 253 (SSSS…SGSD). A Phosphoserine modification is found at S318. Disordered regions lie at residues 326-349 (PRLK…QVDE) and 406-431 (FEPH…NNAE). A compositionally biased stretch (acidic residues) spans 337–347 (DNEDREVDSQV). The span at 406-419 (FEPHWNDLSPHDPN) shows a compositional bias: basic and acidic residues. The segment covering 420-430 (DPSSSLHSNNA) has biased composition (polar residues). Residues S449 and S452 each carry the phosphoserine modification. A run of 2 helical transmembrane segments spans residues 745-765 (ITLI…FGMN) and 776-796 (LAWF…GWII).

This sequence belongs to the CorA metal ion transporter (MIT) (TC 1.A.35) family.

Its subcellular location is the cytoplasm. The protein resides in the membrane. The chain is Putative metal ion transporter C27B12.12c from Schizosaccharomyces pombe (strain 972 / ATCC 24843) (Fission yeast).